Reading from the N-terminus, the 143-residue chain is Nucleoside diphosphate kinase 2 (143 aa).

Residues Lys11, Phe59, Arg87, Thr93, Arg104, and Asn114 each contribute to the ATP site. His117 (pros-phosphohistidine intermediate) is an active-site residue.

This sequence belongs to the NDK family. In terms of assembly, homotetramer. Mg(2+) serves as cofactor.

It localises to the cytoplasm. The catalysed reaction is a 2'-deoxyribonucleoside 5'-diphosphate + ATP = a 2'-deoxyribonucleoside 5'-triphosphate + ADP. The enzyme catalyses a ribonucleoside 5'-diphosphate + ATP = a ribonucleoside 5'-triphosphate + ADP. In terms of biological role, major role in the synthesis of nucleoside triphosphates other than ATP. The ATP gamma phosphate is transferred to the NDP beta phosphate via a ping-pong mechanism, using a phosphorylated active-site intermediate. This is Nucleoside diphosphate kinase 2 from Protochlamydia amoebophila (strain UWE25).